Consider the following 151-residue polypeptide: S-protein homolog 74 (151 aa).

The N-terminal stretch at 1–25 (MNYIKQFILAICFYLVLTCQDHVLA) is a signal peptide.

The protein belongs to the plant self-incompatibility (S1) protein family.

The protein localises to the secreted. This chain is S-protein homolog 74, found in Arabidopsis thaliana (Mouse-ear cress).